The sequence spans 851 residues: MTARNSASIPTSIRKTSENEVSGDETPAGVGNLSTKTASKTSLTFRQSSSDESTSSYSGNHHNINIQHHPNRPFRTNSSSFSPNDYSISESPSKSKKDGVHVSAVQLDNETDSEVESEVEELERELEAIEDSVYPEVRAAVNPTDDVNLPVNTWRTWVLTTIFVIVFAAVNQFFSLRYPALSISFIVAQLILFPLGKLLNLLPNWKIGYGRFSFYLNSSPFNVKEHAAITIAVSLTSSTAYATNILSAQTSFYKQNLSWGYKILIVLTSQMLGYGFAGLTRRWIVYPAAMIWPQTLVSTVLFRTLHGNSGNDIGVLKNNRISANGWTISRYRFFAYVMIGSFVFYWFPGFIFKGLSYFTVLCWIWPKNRVVNQLFGYNSGLGILPLTFDWQQVVYNSNPLASPWWVICNTFGSVVLIFWIVVPILYYKGVWFSNYLPMLSSSTFDHTGVSYNSSRVLNSDYSFNHTKYESYSPLYMPMSYSMSTALNFAAVTAIFTHCALYNGKDIWQRLWKESGKDECIHRKLMRNYKEAPQWWYATLFIVVFGLTIFTVRYYDTQCPVWALIVALLIFIVNFIPQGVLEGITNQHVGLNIITELIGGYILPGKPLANLMIKLYGFIPMRQGLEFSRDLKLAQYMKIPPRILFFVQLFATILGGITQVAVQEWMNYHIPGICTTSQSNGFTCPNGRSIYNASLIWGAIGPAKMFSKGKPYYPLIFFFLIGAVAPFITWGLRKRFPKSWIGKLNAPVLFTGPGNIPPATGINYSSWAIVGFIFNYVIRKRAIHWWRKYNYVLAAAMDSGVAVAGVVIFLCVSYPGGKITWWGNTVYTKTYDWKSVPYRSLGPNETFGYTNW.

The span at 1–14 shows a compositional bias: polar residues; the sequence is MTARNSASIPTSIR. The segment at 1 to 116 is disordered; that stretch reads MTARNSASIP…LDNETDSEVE (116 aa). N32 is a glycosylation site (N-linked (GlcNAc...) asparagine). Residues 33–68 are compositionally biased toward low complexity; the sequence is LSTKTASKTSLTFRQSSSDESTSSYSGNHHNINIQH. Residues 74 to 92 show a composition bias toward polar residues; sequence FRTNSSSFSPNDYSISESP. N77 carries an N-linked (GlcNAc...) asparagine glycan. S93 carries the phosphoserine modification. A coiled-coil region spans residues 105–134; that stretch reads VQLDNETDSEVESEVEELERELEAIEDSVY. A glycan (N-linked (GlcNAc...) asparagine) is linked at N109. The next 2 membrane-spanning stretches (helical) occupy residues 156 to 176 and 179 to 199; these read TWVL…FFSL and PALS…GKLL. A glycan (N-linked (GlcNAc...) asparagine) is linked at N256. 4 helical membrane-spanning segments follow: residues 259–279, 282–302, 333–353, and 405–425; these read WGYK…FAGL, RWIV…TVLF, FFAY…FIFK, and WVIC…VPIL. N-linked (GlcNAc...) asparagine glycans are attached at residues N452 and N464. The next 5 membrane-spanning stretches (helical) occupy residues 480–500, 531–551, 560–580, 592–612, and 642–662; these read YSMS…HCAL, APQW…IFTV, VWAL…QGVL, IITE…NLMI, and ILFF…VAVQ. N-linked (GlcNAc...) asparagine glycosylation occurs at N691. 3 helical membrane-spanning segments follow: residues 711 to 731, 757 to 777, and 791 to 811; these read YYPL…TWGL, PATG…NYVI, and VLAA…FLCV. N-linked (GlcNAc...) asparagine glycosylation is present at N843.

It belongs to the oligopeptide OPT transporter family.

It is found in the endoplasmic reticulum membrane. The protein resides in the cell membrane. Its function is as follows. High-affinity glutathione transporter which plays a role in scavenging glutathione from the extracellular environment for the maintenance of sulfur homeostasis. The protein is Glutathione transporter 1 (pgt1) of Schizosaccharomyces pombe (strain 972 / ATCC 24843) (Fission yeast).